Consider the following 281-residue polypeptide: MTDPATTMSWVQVIVLSVVQGLTEFLPVSSSGHLRIVSQLFWGEDAGASFTAVIQLGTELAVLVFFAKDIWRILTAWFAGLADKSKRNFDYRMGWMVIAGTIPVGLAGVLLKDLIRENFRNLWITATVLILFSLVFILAERRGKKTRGFEELTMKDAVLMGLWQCLALIPGVSRSGGTISGGLFLNLDREVATRFSFLLAIPAVLASGLFSLPDAFDPQAGQAASGLQLLVGSGIGFVVGYISIAWLLKFVSNHSFAWFAAYRIPLGLLVMALLGTGVMAA.

6 helical membrane passes run 95-115 (WMVI…KDLI), 119-139 (FRNL…FILA), 152-172 (LTMK…IPGV), 195-215 (FSFL…LPDA), 227-247 (LQLL…IAWL), and 256-276 (FAWF…LLGT).

The protein belongs to the UppP family.

It is found in the cell membrane. It carries out the reaction di-trans,octa-cis-undecaprenyl diphosphate + H2O = di-trans,octa-cis-undecaprenyl phosphate + phosphate + H(+). Its function is as follows. Catalyzes the dephosphorylation of undecaprenyl diphosphate (UPP). Confers resistance to bacitracin. The chain is Undecaprenyl-diphosphatase 1 from Corynebacterium jeikeium (strain K411).